A 1393-amino-acid chain; its full sequence is DNA-directed RNA polymerase subunit beta (1393 aa).

This sequence belongs to the RNA polymerase beta chain family. The RNAP catalytic core consists of 2 alpha, 1 beta, 1 beta' and 1 omega subunit. When a sigma factor is associated with the core the holoenzyme is formed, which can initiate transcription.

It carries out the reaction RNA(n) + a ribonucleoside 5'-triphosphate = RNA(n+1) + diphosphate. Functionally, DNA-dependent RNA polymerase catalyzes the transcription of DNA into RNA using the four ribonucleoside triphosphates as substrates. The sequence is that of DNA-directed RNA polymerase subunit beta from Rhodospirillum rubrum (strain ATCC 11170 / ATH 1.1.1 / DSM 467 / LMG 4362 / NCIMB 8255 / S1).